We begin with the raw amino-acid sequence, 120 residues long: Large ribosomal subunit protein bL19 (120 aa).

Belongs to the bacterial ribosomal protein bL19 family.

In terms of biological role, this protein is located at the 30S-50S ribosomal subunit interface and may play a role in the structure and function of the aminoacyl-tRNA binding site. The chain is Large ribosomal subunit protein bL19 from Marinomonas sp. (strain MWYL1).